We begin with the raw amino-acid sequence, 470 residues long: Zinc finger protein pat-9 (470 aa).

The tract at residues 1–25 is disordered; sequence MENRTPMQHHSGYEIVKSEPPSTPK. C2H2-type zinc fingers lie at residues 84 to 106, 112 to 134, and 140 to 162; these read YPCNLCSSKFGSKMELEEHQNSH, FECDTCNARFNRRSTLWNHKRIH, and FVCTVCQMTFKWKNSLKCHKDMH. The interval 191 to 235 is disordered; that stretch reads MEQEENGGLPASSSASSVISHPLITTTSGNKKRSKAAKAKQTPSS. The short motif at 221–230 is the Nuclear localization signal element; that stretch reads KKRSKAAKAK.

The protein belongs to the krueppel C2H2-type zinc-finger protein family. In terms of tissue distribution, expressed in body wall muscle and gonad (at protein level).

It is found in the nucleus. It localises to the chromosome. Probable transcription factor; required for proper organization of muscle myofilaments and for their recruitment to the M line. The protein is Zinc finger protein pat-9 of Caenorhabditis elegans.